Consider the following 286-residue polypeptide: Probable transport system permease protein NifC (286 aa).

6 helical membrane-spanning segments follow: residues 34–54 (LFLA…ISMI), 75–95 (IILS…IGTP), 114–134 (IFVE…LLLA), 152–172 (VIFT…ALYV), 216–236 (GLIL…MFAG), and 257–277 (IKMA…LLLL). Positions 75–278 (IILSFVTSLI…IMTFVLLLLV (204 aa)) constitute an ABC transmembrane type-1 domain.

This sequence belongs to the binding-protein-dependent transport system permease family. CysTW subfamily.

It is found in the cell membrane. Its function is as follows. May be involved in molybdenum transport. The chain is Probable transport system permease protein NifC (nifC) from Clostridium pasteurianum.